Reading from the N-terminus, the 217-residue chain is Small ribosomal subunit protein uS3 (217 aa).

In terms of domain architecture, KH type-2 spans 38 to 106 (IRKFIQKELA…QVHINIVEIK (69 aa)).

The protein belongs to the universal ribosomal protein uS3 family. Part of the 30S ribosomal subunit. Forms a tight complex with proteins S10 and S14.

Its function is as follows. Binds the lower part of the 30S subunit head. Binds mRNA in the 70S ribosome, positioning it for translation. This is Small ribosomal subunit protein uS3 from Streptococcus thermophilus (strain CNRZ 1066).